The following is a 127-amino-acid chain: Large ribosomal subunit protein bL17 (127 aa).

This sequence belongs to the bacterial ribosomal protein bL17 family. Part of the 50S ribosomal subunit. Contacts protein L32.

The sequence is that of Large ribosomal subunit protein bL17 from Xanthomonas euvesicatoria pv. vesicatoria (strain 85-10) (Xanthomonas campestris pv. vesicatoria).